A 463-amino-acid polypeptide reads, in one-letter code: General transcription factor IIH subunit 4 (463 aa).

Belongs to the TFB2 family. Component of the 7-subunit TFIIH core complex composed of XPB/ERCC3, XPD/ERCC2, GTF2H1, GTF2H2, GTF2H3, GTF2H4 and GTF2H5, which is active in NER. The core complex associates with the 3-subunit CDK-activating kinase (CAK) module composed of CCNH/cyclin H, CDK7 and MNAT1 to form the 10-subunit holoenzyme (holo-TFIIH) active in transcription. Part of TBP-based Pol II pre-initiation complex (PIC), in which Pol II core assembles with general transcription factors and other specific initiation factors including GTF2E1, GTF2E2, GTF2F1, GTF2F2, TCEA1, ERCC2, ERCC3, GTF2H2, GTF2H3, GTF2H4, GTF2H5, GTF2A1, GTF2A2, GTF2B and TBP; this large multi-subunit PIC complex mediates DNA unwinding and targets Pol II core to the transcription start site where the first phosphodiester bond forms.

Its subcellular location is the nucleus. Functionally, component of the general transcription and DNA repair factor IIH (TFIIH) core complex, which is involved in general and transcription-coupled nucleotide excision repair (NER) of damaged DNA and, when complexed to CAK, in RNA transcription by RNA polymerase II. In NER, TFIIH acts by opening DNA around the lesion to allow the excision of the damaged oligonucleotide and its replacement by a new DNA fragment. In transcription, TFIIH has an essential role in transcription initiation. When the pre-initiation complex (PIC) has been established, TFIIH is required for promoter opening and promoter escape. Phosphorylation of the C-terminal tail (CTD) of the largest subunit of RNA polymerase II by the kinase module CAK controls the initiation of transcription. In Mus musculus (Mouse), this protein is General transcription factor IIH subunit 4 (Gtf2h4).